Consider the following 289-residue polypeptide: tRNA pseudouridine synthase B (289 aa).

Asp38 (nucleophile) is an active-site residue.

Belongs to the pseudouridine synthase TruB family. Type 1 subfamily.

It carries out the reaction uridine(55) in tRNA = pseudouridine(55) in tRNA. In terms of biological role, responsible for synthesis of pseudouridine from uracil-55 in the psi GC loop of transfer RNAs. In Clostridium tetani (strain Massachusetts / E88), this protein is tRNA pseudouridine synthase B.